Consider the following 299-residue polypeptide: ATP phosphoribosyltransferase (299 aa).

The protein belongs to the ATP phosphoribosyltransferase family. Long subfamily. Mg(2+) is required as a cofactor.

The protein resides in the cytoplasm. It carries out the reaction 1-(5-phospho-beta-D-ribosyl)-ATP + diphosphate = 5-phospho-alpha-D-ribose 1-diphosphate + ATP. The protein operates within amino-acid biosynthesis; L-histidine biosynthesis; L-histidine from 5-phospho-alpha-D-ribose 1-diphosphate: step 1/9. Its activity is regulated as follows. Feedback inhibited by histidine. Its function is as follows. Catalyzes the condensation of ATP and 5-phosphoribose 1-diphosphate to form N'-(5'-phosphoribosyl)-ATP (PR-ATP). Has a crucial role in the pathway because the rate of histidine biosynthesis seems to be controlled primarily by regulation of HisG enzymatic activity. The chain is ATP phosphoribosyltransferase from Shewanella oneidensis (strain ATCC 700550 / JCM 31522 / CIP 106686 / LMG 19005 / NCIMB 14063 / MR-1).